We begin with the raw amino-acid sequence, 254 residues long: Triosephosphate isomerase (254 aa).

Residue 12 to 14 (NWK) coordinates substrate. The active-site Electrophile is the histidine 99. Glutamate 169 serves as the catalytic Proton acceptor. Substrate contacts are provided by residues glycine 175, serine 214, and 235 to 236 (GG).

The protein belongs to the triosephosphate isomerase family. As to quaternary structure, homodimer.

The protein localises to the cytoplasm. The catalysed reaction is D-glyceraldehyde 3-phosphate = dihydroxyacetone phosphate. The protein operates within carbohydrate biosynthesis; gluconeogenesis. It functions in the pathway carbohydrate degradation; glycolysis; D-glyceraldehyde 3-phosphate from glycerone phosphate: step 1/1. Functionally, involved in the gluconeogenesis. Catalyzes stereospecifically the conversion of dihydroxyacetone phosphate (DHAP) to D-glyceraldehyde-3-phosphate (G3P). This is Triosephosphate isomerase from Bartonella henselae (strain ATCC 49882 / DSM 28221 / CCUG 30454 / Houston 1) (Rochalimaea henselae).